The sequence spans 118 residues: Ribosome-binding factor A (118 aa).

This sequence belongs to the RbfA family. Monomer. Binds 30S ribosomal subunits, but not 50S ribosomal subunits or 70S ribosomes.

The protein localises to the cytoplasm. In terms of biological role, one of several proteins that assist in the late maturation steps of the functional core of the 30S ribosomal subunit. Associates with free 30S ribosomal subunits (but not with 30S subunits that are part of 70S ribosomes or polysomes). Required for efficient processing of 16S rRNA. May interact with the 5'-terminal helix region of 16S rRNA. This chain is Ribosome-binding factor A, found in Dehalococcoides mccartyi (strain ATCC BAA-2100 / JCM 16839 / KCTC 5957 / BAV1).